A 998-amino-acid chain; its full sequence is Calcium-transporting ATPase 3, endoplasmic reticulum-type (998 aa).

The Cytoplasmic portion of the chain corresponds to 1 to 48 (MEDAYARSVSEVLDFFGVDPTKGLSDSQVVHHSRLYGRNVLPEEKRTP). A helical membrane pass occupies residues 49–69 (FWKLVLKQFDDLLVKILIVAA). Over 70–89 (IVSFVLALANGETGLTAFLE) the chain is Lumenal. A helical transmembrane segment spans residues 90–109 (PFVILLILAANAAVGVITET). At 110-250 (NAEKALEELR…DEATPLKKKL (141 aa)) the chain is on the cytoplasmic side. A helical transmembrane segment spans residues 251-270 (DEFGSFLAKVIAGICVLVWV). Residues 271–291 (VNIGHFSDPSHGGFFKGAIHY) are Lumenal-facing. Residues 292–309 (FKIAVALAVAAIPEGLPA) traverse the membrane as a helical segment. V300, A301, I303, and E305 together coordinate Ca(2+). The Cytoplasmic portion of the chain corresponds to 310–746 (VVTTCLALGT…AEGRAIYNNT (437 aa)). The active-site 4-aspartylphosphate intermediate is D347. Mg(2+) contacts are provided by D692 and D696. The helical transmembrane segment at 747–766 (KQFIRYMISSNIGEVVCIFV) threads the bilayer. Ca(2+)-binding residues include N757 and E760. The Lumenal portion of the chain corresponds to 767–776 (AAVLGIPDTL). Residues 777–797 (APVQLLWVNLVTDGLPATAIG) traverse the membrane as a helical segment. 3 residues coordinate Ca(2+): N785, T788, and D789. At 798 to 817 (FNKQDSDVMKAKPRKVGEAV) the chain is on the cytoplasmic side. The chain crosses the membrane as a helical span at residues 818-840 (VTGWLFFRYLVIGVYVGLATVAG). Over 841–883 (FIWWFVYSDGGPKLTYSELMNFETCALRETTYPCSIFEDRHPS) the chain is Lumenal. A helical transmembrane segment spans residues 884-903 (TVAMTVLVVVEMFNALNNLS). E894 lines the Ca(2+) pocket. Topologically, residues 904 to 916 (ENQSLLVITPRSN) are cytoplasmic. A helical membrane pass occupies residues 917-935 (LWLVGSIILTMLLHVLILY). Residues 936–950 (VHPLAVLFSVTPLSW) are Lumenal-facing. A helical transmembrane segment spans residues 951–971 (AEWTAVLYLSFPVIIIDELLK). Residues 972–998 (FLSRNTGMRFRFRLRKADLLPKDRRDK) lie on the Cytoplasmic side of the membrane.

It belongs to the cation transport ATPase (P-type) (TC 3.A.3) family. Type IIA subfamily. As to expression, expressed in root cap, in elongation and differentiation zones of roots, in vascular tissues of roots, leaves, floral pedicels and style, in leaves, including hydathodes and guard cells, in stamens, in petals, in sepals and in siliques.

It localises to the golgi apparatus membrane. The protein resides in the endosome membrane. It is found in the prevacuolar compartment membrane. The enzyme catalyses Ca(2+)(in) + ATP + H2O = Ca(2+)(out) + ADP + phosphate + H(+). This magnesium-dependent enzyme catalyzes the hydrolysis of ATP coupled with the translocation of calcium from the cytosol to an endomembrane compartment. Involved in calcium-enhanced root growth, in tolerance to toxic levels of manganese and in secretory processes. Has a crucial role in manganese nutrition, but is not involved in transporting copper, iron or zinc. This is Calcium-transporting ATPase 3, endoplasmic reticulum-type from Arabidopsis thaliana (Mouse-ear cress).